We begin with the raw amino-acid sequence, 140 residues long: uncharacterized protein (140 aa).

14 repeat units span residues 1-10 (MFARLCPVSE), 11-20 (TFGRLCPVSE), 21-30 (TFARLCPVSE), 31-40 (TFARLCPVSE), 41-50 (TFARLCPVSE), 51-60 (TFGRLCPVSE), 61-70 (MFGRLSPVSE), 71-80 (TFGRLCPVSE), 81-90 (TFGRLCPVSE), 91-100 (MFARLCPVSE), 101-110 (TFGRLSPVSE), 111-120 (MFGRLCPVSE), 121-130 (MFGRLCPVSE), and 131-140 (MFGRLCPVIT). Positions 1 to 140 (MFARLCPVSE…MFGRLCPVIT (140 aa)) are 14 X 10 AA tandem repeats of [MT]-F-[AG]-R-L-[CS]-P-V-[SI]-[ET].

This is an uncharacterized protein from Homo sapiens (Human).